The following is a 272-amino-acid chain: METYAVFGNPIAHSKSPFIHQQFAQQLNIEHPYGRVLAPINDFINTLNAFFRAGGKGANVTVPFKEEAFARADELTERAALAGAVNTLMRLEDGRLLGDNTDGVGLLSDLERLSFIRPGLRILLIGAGGASRGVLLPLLSLDCAVTITNRTVSRAEELAKLFEHTGSIQALGMDELEGHEFDLIINATSSGISGDIPAIPSSLIHPGIYCYDMFYQKGKTPFLAWCEQRGSKRNADGLGMLVAQAAHAFLLWHGVLPDVEPVIKLLQQELSA.

Shikimate-binding positions include S14–S16 and T61. K65 (proton acceptor) is an active-site residue. E77 contacts NADP(+). Shikimate-binding residues include N86 and D102. NADP(+)-binding positions include G126–A130, N149–R154, and M213. Y215 lines the shikimate pocket. G237 is a binding site for NADP(+).

Belongs to the shikimate dehydrogenase family. As to quaternary structure, homodimer.

It carries out the reaction shikimate + NADP(+) = 3-dehydroshikimate + NADPH + H(+). The protein operates within metabolic intermediate biosynthesis; chorismate biosynthesis; chorismate from D-erythrose 4-phosphate and phosphoenolpyruvate: step 4/7. Involved in the biosynthesis of the chorismate, which leads to the biosynthesis of aromatic amino acids. Catalyzes the reversible NADPH linked reduction of 3-dehydroshikimate (DHSA) to yield shikimate (SA). The polypeptide is Shikimate dehydrogenase (NADP(+)) (Shigella dysenteriae serotype 1 (strain Sd197)).